Reading from the N-terminus, the 122-residue chain is Small ribosomal subunit protein uS12c (122 aa).

This sequence belongs to the universal ribosomal protein uS12 family. In terms of assembly, part of the 30S ribosomal subunit.

The protein localises to the plastid. It localises to the chloroplast. In terms of biological role, with S4 and S5 plays an important role in translational accuracy. Located at the interface of the 30S and 50S subunits. This Mesostigma viride (Green alga) protein is Small ribosomal subunit protein uS12c (rps12).